Consider the following 358-residue polypeptide: SPbeta prophage-derived probable integrase/recombinase YopP (358 aa).

Residues 23–114 (NKDIRSSSGN…SLKMLYTYLE (92 aa)) form the Core-binding (CB) domain. Residues 137–319 (KNWDKTTQTE…NIANSAGVTM (183 aa)) form the Tyr recombinase domain. Residues arginine 178, lysine 206, histidine 268, and histidine 295 contribute to the active site. Residue tyrosine 304 is the O-(3'-phospho-DNA)-tyrosine intermediate of the active site.

This sequence belongs to the 'phage' integrase family.

Functionally, probable recombinase that does not seem to have a role in chromosome dimer resolution per se but rather may have some facilitative role during chromosome partitioning in general. The sequence is that of SPbeta prophage-derived probable integrase/recombinase YopP (yopP) from Bacillus subtilis (strain 168).